Reading from the N-terminus, the 588-residue chain is uncharacterized protein (588 aa).

This is an uncharacterized protein from Schizosaccharomyces pombe (strain 972 / ATCC 24843) (Fission yeast).